Reading from the N-terminus, the 623-residue chain is Alpha-1,2-mannosyltransferase Alg9 (623 aa).

8 helical membrane-spanning segments follow: residues 152-172 (LIFYMVRCMLGFGCAVMERYM), 193-223 (LFSVGMFVSSTALLPSSFSMYFGCAALAAWW), 229-254 (FAIFLTAISALLGWPFAALIGIPLVL), 266-284 (FVQWTLISGATVAIPMIAI), 326-348 (FLNFNIIWLLALQLPIMLVIDYL), 360-378 (FPHYISLAPLYLWLLVFFA), 390-410 (IYPLISLCGAITVDVYQRIFF), and 431-452 (FIAILVMVTSTLLGLSRVFALY).

The protein belongs to the glycosyltransferase 22 family.

Its subcellular location is the endoplasmic reticulum membrane. It catalyses the reaction an alpha-D-Man-(1-&gt;2)-alpha-D-Man-(1-&gt;2)-alpha-D-Man-(1-&gt;3)-[alpha-D-Man-(1-&gt;3)-alpha-D-Man-(1-&gt;6)]-beta-D-Man-(1-&gt;4)-beta-D-GlcNAc-(1-&gt;4)-alpha-D-GlcNAc-diphospho-di-trans,poly-cis-dolichol + a di-trans,poly-cis-dolichyl beta-D-mannosyl phosphate = an alpha-D-Man-(1-&gt;2)-alpha-D-Man-(1-&gt;2)-alpha-D-Man-(1-&gt;3)-[alpha-D-Man-(1-&gt;2)-alpha-D-Man-(1-&gt;3)-alpha-D-Man-(1-&gt;6)]-beta-D-Man-(1-&gt;4)-beta-D-GlcNAc-(1-&gt;4)-alpha-D-GlcNAc-diphospho-di-trans,poly-cis-dolichol + a di-trans,poly-cis-dolichyl phosphate + H(+). The enzyme catalyses an alpha-D-Man-(1-&gt;2)-alpha-D-Man-(1-&gt;2)-alpha-D-Man-(1-&gt;3)-[alpha-D-Man-(1-&gt;2)-alpha-D-Man-(1-&gt;3)-[alpha-D-Man-(1-&gt;6)]-alpha-D-Man-(1-&gt;6)]-beta-D-Man-(1-&gt;4)-beta-D-GlcNAc-(1-&gt;4)-alpha-D-GlcNAc-diphospho-di-trans,poly-cis-dolichol + a di-trans,poly-cis-dolichyl beta-D-mannosyl phosphate = an alpha-D-Man-(1-&gt;2)-alpha-D-Man-(1-&gt;2)-alpha-D-Man-(1-&gt;3)-[alpha-D-Man-(1-&gt;2)-alpha-D-Man-(1-&gt;3)-[alpha-D-Man-(1-&gt;2)-alpha-D-Man-(1-&gt;6)]-alpha-D-Man-(1-&gt;6)]-beta-D-Man-(1-&gt;4)-beta-D-GlcNAc-(1-&gt;4)-alpha-D-GlcNAc-diphospho-di-trans,poly-cis-dolichol + a di-trans,poly-cis-dolichyl phosphate + H(+). It functions in the pathway protein modification; protein glycosylation. Functionally, probable alpha-1,2-mannosyltransferase involved in the N-glycosylation pathway. Probably involved in glycosylation of the TNF receptor grnd, regulating its ligand affinity. Required for normal epithelial growth and architecture. Suppressor of JNK-dependent intestinal stem cell proliferation. The protein is Alpha-1,2-mannosyltransferase Alg9 of Drosophila melanogaster (Fruit fly).